The sequence spans 422 residues: Dihydroorotase (422 aa).

Residues H59 and H61 each contribute to the Zn(2+) site. Residues H61–R63 and N93 each bind substrate. Residues D150, H177, and H230 each coordinate Zn(2+). Residue N276 coordinates substrate. D303 is a binding site for Zn(2+). Residue D303 is part of the active site. H307 is a binding site for substrate.

The protein belongs to the metallo-dependent hydrolases superfamily. DHOase family. Class I DHOase subfamily. The cofactor is Zn(2+).

The enzyme catalyses (S)-dihydroorotate + H2O = N-carbamoyl-L-aspartate + H(+). It participates in pyrimidine metabolism; UMP biosynthesis via de novo pathway; (S)-dihydroorotate from bicarbonate: step 3/3. Its function is as follows. Catalyzes the reversible cyclization of carbamoyl aspartate to dihydroorotate. This Streptococcus pyogenes serotype M1 protein is Dihydroorotase.